A 368-amino-acid polypeptide reads, in one-letter code: Putative agmatine deiminase (368 aa).

Cys359 functions as the Amidino-cysteine intermediate in the catalytic mechanism.

Belongs to the agmatine deiminase family.

It carries out the reaction agmatine + H2O = N-carbamoylputrescine + NH4(+). In Pectobacterium atrosepticum (strain SCRI 1043 / ATCC BAA-672) (Erwinia carotovora subsp. atroseptica), this protein is Putative agmatine deiminase.